Reading from the N-terminus, the 292-residue chain is Transcription factor-like protein DPA (292 aa).

Residues 1 to 25 (MSMEMELFVTPEKQRQHPSVSVEKT) form a disordered region. The DNA-binding element occupies 51 to 135 (GGGLRQFSVM…KKEIRWKGLP (85 aa)). The short motif at 101-135 (NEKNIRRRVYDALNVFMALDIIARDKKEIRWKGLP) is the DEF box element. Residues 163-184 (LKELREKVSSLESLMSRNQEMV) are a coiled coil. The tract at residues 246–280 (QEQNRVSSSSSTHHQSQHSSAHSSSSSCIASGTSG) is disordered. Residues 252–280 (SSSSSTHHQSQHSSAHSSSSSCIASGTSG) show a composition bias toward low complexity.

The protein belongs to the E2F/DP family. Heterodimer with E2F. Interacts preferentially with E2FA and E2FB, but also with E2FC. In terms of tissue distribution, strongly expressed in the actively dividing tissues of the shoot apical meristem, young leaf primordia, the vascular tissues of the maturing leaf primordia and axillary buds.

It is found in the cytoplasm. Its subcellular location is the nucleus. In terms of biological role, involved in the regulation of the G1/S transition. Increases the DNA binding and the transactivation activities of E2F proteins after heterodimerization. The complex DPA/E2FA promotes cell division and acts as a regulator of the endocycle. Positively regulates the activity of S phase-specific genes. This chain is Transcription factor-like protein DPA (DPA), found in Arabidopsis thaliana (Mouse-ear cress).